Reading from the N-terminus, the 309-residue chain is Homoserine O-succinyltransferase (309 aa).

Catalysis depends on C142, which acts as the Acyl-thioester intermediate. 2 residues coordinate substrate: K163 and S192. H235 functions as the Proton acceptor in the catalytic mechanism. Residue E237 is part of the active site. R249 serves as a coordination point for substrate.

The protein belongs to the MetA family.

It is found in the cytoplasm. It catalyses the reaction L-homoserine + succinyl-CoA = O-succinyl-L-homoserine + CoA. It functions in the pathway amino-acid biosynthesis; L-methionine biosynthesis via de novo pathway; O-succinyl-L-homoserine from L-homoserine: step 1/1. Functionally, transfers a succinyl group from succinyl-CoA to L-homoserine, forming succinyl-L-homoserine. The chain is Homoserine O-succinyltransferase from Serratia proteamaculans (strain 568).